The chain runs to 289 residues: Acetyl-coenzyme A carboxylase carboxyl transferase subunit beta (289 aa).

Residues 34-289 (MWVKCNKCGD…KLINMHQNSF (256 aa)) enclose the CoA carboxyltransferase N-terminal domain. Residues cysteine 38, cysteine 41, cysteine 57, and cysteine 60 each contribute to the Zn(2+) site. The segment at 38 to 60 (CNKCGDILYQNDLEKNYMVCNLC) adopts a C4-type zinc-finger fold.

It belongs to the AccD/PCCB family. In terms of assembly, acetyl-CoA carboxylase is a heterohexamer composed of biotin carboxyl carrier protein (AccB), biotin carboxylase (AccC) and two subunits each of ACCase subunit alpha (AccA) and ACCase subunit beta (AccD). Zn(2+) is required as a cofactor.

The protein localises to the cytoplasm. The catalysed reaction is N(6)-carboxybiotinyl-L-lysyl-[protein] + acetyl-CoA = N(6)-biotinyl-L-lysyl-[protein] + malonyl-CoA. Its pathway is lipid metabolism; malonyl-CoA biosynthesis; malonyl-CoA from acetyl-CoA: step 1/1. Component of the acetyl coenzyme A carboxylase (ACC) complex. Biotin carboxylase (BC) catalyzes the carboxylation of biotin on its carrier protein (BCCP) and then the CO(2) group is transferred by the transcarboxylase to acetyl-CoA to form malonyl-CoA. In Clostridium botulinum (strain Langeland / NCTC 10281 / Type F), this protein is Acetyl-coenzyme A carboxylase carboxyl transferase subunit beta.